The chain runs to 239 residues: Probable 2-phosphosulfolactate phosphatase (239 aa).

It belongs to the ComB family. It depends on Mg(2+) as a cofactor.

It catalyses the reaction (2R)-O-phospho-3-sulfolactate + H2O = (2R)-3-sulfolactate + phosphate. This is Probable 2-phosphosulfolactate phosphatase from Clostridium botulinum (strain 657 / Type Ba4).